Here is a 235-residue protein sequence, read N- to C-terminus: Sugar fermentation stimulation protein homolog (235 aa).

This sequence belongs to the SfsA family.

The sequence is that of Sugar fermentation stimulation protein homolog from Photorhabdus laumondii subsp. laumondii (strain DSM 15139 / CIP 105565 / TT01) (Photorhabdus luminescens subsp. laumondii).